Consider the following 181-residue polypeptide: Oligoribonuclease (181 aa).

The Exonuclease domain maps to 8–171 (LIWIDLEMTG…DDIRESVAEL (164 aa)). Tyrosine 129 is an active-site residue.

The protein belongs to the oligoribonuclease family.

The protein resides in the cytoplasm. Its function is as follows. 3'-to-5' exoribonuclease specific for small oligoribonucleotides. In Enterobacter sp. (strain 638), this protein is Oligoribonuclease.